Here is a 130-residue protein sequence, read N- to C-terminus: Small ribosomal subunit protein uS13 (130 aa).

Residues 97–116 (PVRGQRTKTNARTRRGKRKT) show a composition bias toward basic residues. The tract at residues 97 to 130 (PVRGQRTKTNARTRRGKRKTVGAGKSTSSIKRVK) is disordered. Residues 121–130 (KSTSSIKRVK) are compositionally biased toward polar residues.

This sequence belongs to the universal ribosomal protein uS13 family. In terms of assembly, part of the 30S ribosomal subunit. Forms a loose heterodimer with protein S19. Forms two bridges to the 50S subunit in the 70S ribosome.

Functionally, located at the top of the head of the 30S subunit, it contacts several helices of the 16S rRNA. In the 70S ribosome it contacts the 23S rRNA (bridge B1a) and protein L5 of the 50S subunit (bridge B1b), connecting the 2 subunits; these bridges are implicated in subunit movement. Contacts the tRNAs in the A and P-sites. This is Small ribosomal subunit protein uS13 from Endomicrobium trichonymphae.